Reading from the N-terminus, the 727-residue chain is Two-component response regulator-like APRR7 (727 aa).

A disordered region spans residues 1–47 (MNANEEGEGSRYPITDRKTGETKFDRVESRTEKHSEEEKTNGITMDV). Residues 14–40 (ITDRKTGETKFDRVESRTEKHSEEEKT) show a composition bias toward basic and acidic residues. Residues 79–197 (RVLLVENDDC…ELKILWQHVW (119 aa)) enclose the Response regulatory domain. Disordered stretches follow at residues 203-265 (SSGS…KKAV), 291-312 (NPEF…QEHD), 339-416 (KDEP…KTLD), 464-487 (SRYN…SLQD), 509-560 (ESLP…QPLP), and 606-670 (VNGS…SQRE). Over residues 246 to 259 (ASDGSSDGSGAQSS) the composition is skewed to low complexity. 3 stretches are compositionally biased toward polar residues: residues 344 to 353 (SKTTGIMRQD), 467 to 487 (NPAS…SLQD), and 519 to 535 (VGSN…NNAF). The segment covering 538–555 (PGAPKVSSAGSSSVKHSS) has biased composition (low complexity). Gly residues predominate over residues 641 to 657 (GKNGNGDGSGSGSGSGS). Residues 669 to 711 (REAALTKFRQKRKERCFRKKVRYQSRKKLAEQRPRVRGQFVRK) enclose the CCT domain.

This sequence belongs to the ARR-like family. Post-translationally, phosphorylated. Phosphorylation varies throughout the diurnal cycle.

The protein localises to the nucleus. Functionally, transcriptional repressor of CCA1 and LHY, and positive regulator of LWD1 and LWD2 expression. Represses the expression of other clock proteins and master regulators of plant growth, development and response to abiotic stress. Involved in the positive and negative feedback loops of the circadian clock. Controls photoperiodic flowering response and temperature compensation. Expression of several members of the ARR-like family is controlled by circadian rhythm. APRR9, APRR7, and APRR5 coordinately act on the upstream region of the target genes to repress their expression from noon until midnight. The particular coordinated sequential expression of APRR9, APRR7, APRR5, APRR3 and APPR1 result to circadian waves that may be at the basis of the endogenous circadian clock. This is Two-component response regulator-like APRR7 (APRR7) from Arabidopsis thaliana (Mouse-ear cress).